The primary structure comprises 240 residues: MGKRLISQNRGRGTPKYRSPTHKRKGAVKYRSYDEMEKDGKILGTVVDILHDPGRSAPVAKVRFANDEERLVLIPEGIQVGEEIECGISAEIKPGNVLPLGEIPEGIPVYNIETIPGDGGKLVRSGGCYAHVVSHDVGKTIVKLPSGFSKVLNPACRATVGVVAGGGRKEKPFVKAGKKHHSLSAKAIAWPKVRGVAMNAVDHPYGGGRHQHLGKPSSVSRHTSPGRKVGHIASRRTGRK.

A compositionally biased stretch (polar residues) spans 1–11 (MGKRLISQNRG). 2 disordered regions span residues 1 to 28 (MGKR…KGAV) and 206 to 240 (GGGR…TGRK). Composition is skewed to basic residues over residues 13-28 (GTPK…KGAV) and 224-240 (SPGR…TGRK).

It belongs to the universal ribosomal protein uL2 family. Part of the 50S ribosomal subunit. Forms a bridge to the 30S subunit in the 70S ribosome.

Its function is as follows. One of the primary rRNA binding proteins. Required for association of the 30S and 50S subunits to form the 70S ribosome, for tRNA binding and peptide bond formation. It has been suggested to have peptidyltransferase activity; this is somewhat controversial. Makes several contacts with the 16S rRNA in the 70S ribosome. This chain is Large ribosomal subunit protein uL2, found in Methanococcus maripaludis (strain C7 / ATCC BAA-1331).